Here is a 170-residue protein sequence, read N- to C-terminus: MLKLLDFSLRLSVIPLSVATIWLTVTNKQDNSIYGYLKYSDLTGLKYMVFISGICASYAFIAAVSTWIRCIVTKTWLFFVSDQIVAYLMVTSGTAVLEILYLAYNGDREVSWSEACTSYGKFCYRMKLAVILHALALSCFIILAVISAYRAFSIFEPPLVPSKVVEEDRA.

Residues 1–4 are Cytoplasmic-facing; sequence MLKL. Residues 5–25 form a helical membrane-spanning segment; the sequence is LDFSLRLSVIPLSVATIWLTV. Over 26-47 the chain is Extracellular; sequence TNKQDNSIYGYLKYSDLTGLKY. A helical membrane pass occupies residues 48 to 68; it reads MVFISGICASYAFIAAVSTWI. The Cytoplasmic segment spans residues 69-83; it reads RCIVTKTWLFFVSDQ. A helical membrane pass occupies residues 84 to 104; the sequence is IVAYLMVTSGTAVLEILYLAY. Residues 105-127 are Extracellular-facing; that stretch reads NGDREVSWSEACTSYGKFCYRMK. The chain crosses the membrane as a helical span at residues 128-148; the sequence is LAVILHALALSCFIILAVISA. Residues 149-170 lie on the Cytoplasmic side of the membrane; that stretch reads YRAFSIFEPPLVPSKVVEEDRA.

It belongs to the Casparian strip membrane proteins (CASP) family. As to quaternary structure, homodimer and heterodimers.

It localises to the cell membrane. The chain is CASP-like protein 2D1 from Populus trichocarpa (Western balsam poplar).